The sequence spans 148 residues: Snaclec 27 (148 aa).

An N-terminal signal peptide occupies residues tryptophan 1–alanine 23. Intrachain disulfides connect cysteine 27–cysteine 38, cysteine 55–cysteine 144, and cysteine 121–cysteine 136. A C-type lectin domain is found at histidine 34–lysine 145.

This sequence belongs to the snaclec family. Heterodimer; disulfide-linked. Expressed by the venom gland.

The protein localises to the secreted. Functionally, interferes with one step of hemostasis (modulation of platelet aggregation, or coagulation cascade, for example). This Echis ocellatus (Ocellated saw-scaled viper) protein is Snaclec 27.